The primary structure comprises 269 residues: 4-hydroxy-tetrahydrodipicolinate reductase (269 aa).

11–16 contacts NAD(+); the sequence is GPIGRM. K39 contributes to the NADP(+) binding site. NAD(+)-binding positions include 101-103 and 125-128; these read GTT and ASNF. H158 (proton donor/acceptor) is an active-site residue. H159 is a binding site for (S)-2,3,4,5-tetrahydrodipicolinate. K162 functions as the Proton donor in the catalytic mechanism. 168–169 serves as a coordination point for (S)-2,3,4,5-tetrahydrodipicolinate; the sequence is GT.

Belongs to the DapB family. In terms of assembly, homotetramer.

It localises to the cytoplasm. It carries out the reaction (S)-2,3,4,5-tetrahydrodipicolinate + NAD(+) + H2O = (2S,4S)-4-hydroxy-2,3,4,5-tetrahydrodipicolinate + NADH + H(+). The enzyme catalyses (S)-2,3,4,5-tetrahydrodipicolinate + NADP(+) + H2O = (2S,4S)-4-hydroxy-2,3,4,5-tetrahydrodipicolinate + NADPH + H(+). It functions in the pathway amino-acid biosynthesis; L-lysine biosynthesis via DAP pathway; (S)-tetrahydrodipicolinate from L-aspartate: step 4/4. Functionally, catalyzes the conversion of 4-hydroxy-tetrahydrodipicolinate (HTPA) to tetrahydrodipicolinate. This is 4-hydroxy-tetrahydrodipicolinate reductase from Buchnera aphidicola subsp. Acyrthosiphon pisum (strain APS) (Acyrthosiphon pisum symbiotic bacterium).